A 567-amino-acid chain; its full sequence is CTD small phosphatase-like protein 2 (567 aa).

3 disordered regions span residues 31–53 (QQQQ…HQCE), 100–150 (ASST…FSSV), and 280–361 (NKEN…EEFN). Composition is skewed to low complexity over residues 100–118 (ASST…SPLK), 130–150 (SMND…FSSV), and 286–297 (ESNNSNSNSNSS). A compositionally biased stretch (polar residues) spans 298–308 (PSFFHNLQQHP). Positions 309–332 (TSAATTTTTTTTTITTTSATTSII) are enriched in low complexity. The span at 337-360 (NSDDEIDDECDDESEEEEEDEEEF) shows a compositional bias: acidic residues. Positions 386–544 (HSSPKISLVL…LQLVPFLESL (159 aa)) constitute an FCP1 homology domain.

The protein belongs to the CTDSPL2 family.

Its function is as follows. Probable phosphatase. The chain is CTD small phosphatase-like protein 2 (ctdspl2) from Dictyostelium discoideum (Social amoeba).